The following is a 138-amino-acid chain: Small ribosomal subunit protein uS11 (138 aa).

A compositionally biased stretch (polar residues) spans 1 to 12 (MAKQSAKGSTTT). The segment at 1–37 (MAKQSAKGSTTTKRQRGKRREKKNVPRGQAHIQSTFN) is disordered. Positions 13-22 (KRQRGKRREK) are enriched in basic residues.

It belongs to the universal ribosomal protein uS11 family. As to quaternary structure, part of the 30S ribosomal subunit. Interacts with proteins S7 and S18. Binds to IF-3.

Functionally, located on the platform of the 30S subunit, it bridges several disparate RNA helices of the 16S rRNA. Forms part of the Shine-Dalgarno cleft in the 70S ribosome. The polypeptide is Small ribosomal subunit protein uS11 (Roseiflexus castenholzii (strain DSM 13941 / HLO8)).